The chain runs to 82 residues: Turripeptide Gsp9.2 (82 aa).

The signal sequence occupies residues Met-1–Gly-23. Residues Arg-24 to Arg-46 constitute a propeptide that is removed on maturation. 2 positions are modified to 4-hydroxyproline: Pro-49 and Pro-50. 3 disulfides stabilise this stretch: Cys-53/Cys-68, Cys-58/Cys-72, and Cys-64/Cys-79. Glu-56 is subject to 4-carboxyglutamate.

The protein belongs to the Pg turripeptide superfamily. As to expression, expressed by the venom duct.

Its subcellular location is the secreted. This chain is Turripeptide Gsp9.2, found in Gemmula speciosa (Splendid gem-turris).